A 43-amino-acid chain; its full sequence is Potassium channel toxin gamma-KTx 4.11 (43 aa).

Disulfide bonds link C5-C23, C11-C34, C20-C39, and C24-C41.

Belongs to the ergtoxin family. Gamma-KTx 4 subfamily. In terms of tissue distribution, expressed by the venom gland.

The protein localises to the secreted. Its function is as follows. Reversibly blocks Kv11/ERG potassium channels. This chain is Potassium channel toxin gamma-KTx 4.11, found in Centruroides noxius (Mexican scorpion).